Here is a 347-residue protein sequence, read N- to C-terminus: D-alanine--D-alanine ligase (347 aa).

An ATP-grasp domain is found at 138 to 339; that stretch reads KILCSHAGIP…YSQVIETILA (202 aa). 171-226 contacts ATP; that stretch reads SDRFTFPLFVKPVDAGSSFGCTFVDFFEQLPVAIEHALQHGKSAIVEPALDAPEVF. Mg(2+)-binding residues include aspartate 296, glutamate 308, and asparagine 310.

It belongs to the D-alanine--D-alanine ligase family. Requires Mg(2+) as cofactor. The cofactor is Mn(2+).

It is found in the cytoplasm. It catalyses the reaction 2 D-alanine + ATP = D-alanyl-D-alanine + ADP + phosphate + H(+). It functions in the pathway cell wall biogenesis; peptidoglycan biosynthesis. Functionally, cell wall formation. This is D-alanine--D-alanine ligase from Tropheryma whipplei (strain TW08/27) (Whipple's bacillus).